A 375-amino-acid polypeptide reads, in one-letter code: Ribonuclease D (375 aa).

Positions 3–169 (YQMITTDDAL…LPITAKLMVE (167 aa)) constitute a 3'-5' exonuclease domain. The 80-residue stretch at 210–289 (RTRQLACLQL…EKAQTLPEDA (80 aa)) folds into the HRDC domain.

Belongs to the RNase D family. The cofactor is a divalent metal cation.

It is found in the cytoplasm. It carries out the reaction Exonucleolytic cleavage that removes extra residues from the 3'-terminus of tRNA to produce 5'-mononucleotides.. Exonuclease involved in the 3' processing of various precursor tRNAs. Initiates hydrolysis at the 3'-terminus of an RNA molecule and releases 5'-mononucleotides. This is Ribonuclease D from Escherichia coli (strain K12).